Here is a 323-residue protein sequence, read N- to C-terminus: tRNA U34 carboxymethyltransferase (323 aa).

Carboxy-S-adenosyl-L-methionine-binding positions include Lys91, Trp105, Lys110, Gly130, 152-154 (DPT), 181-182 (IE), Met196, Tyr200, and Arg315.

Belongs to the class I-like SAM-binding methyltransferase superfamily. CmoB family. In terms of assembly, homotetramer.

It carries out the reaction carboxy-S-adenosyl-L-methionine + 5-hydroxyuridine(34) in tRNA = 5-carboxymethoxyuridine(34) in tRNA + S-adenosyl-L-homocysteine + H(+). Its function is as follows. Catalyzes carboxymethyl transfer from carboxy-S-adenosyl-L-methionine (Cx-SAM) to 5-hydroxyuridine (ho5U) to form 5-carboxymethoxyuridine (cmo5U) at position 34 in tRNAs. The polypeptide is tRNA U34 carboxymethyltransferase (Shigella dysenteriae serotype 1 (strain Sd197)).